The following is a 75-amino-acid chain: Sec-independent protein translocase protein TatA (75 aa).

A helical membrane pass occupies residues 1–21; the sequence is MGGISIWQLLIIVAIIVLLFG. The tract at residues 50–75 is disordered; sequence DAEFKSLNKDESATAGSEKVKDKEQA.

It belongs to the TatA/E family. As to quaternary structure, the Tat system comprises two distinct complexes: a TatABC complex, containing multiple copies of TatA, TatB and TatC subunits, and a separate TatA complex, containing only TatA subunits. Substrates initially bind to the TatABC complex, which probably triggers association of the separate TatA complex to form the active translocon.

It is found in the cell inner membrane. Its function is as follows. Part of the twin-arginine translocation (Tat) system that transports large folded proteins containing a characteristic twin-arginine motif in their signal peptide across membranes. TatA could form the protein-conducting channel of the Tat system. The protein is Sec-independent protein translocase protein TatA of Mannheimia succiniciproducens (strain KCTC 0769BP / MBEL55E).